A 371-amino-acid chain; its full sequence is Thyroid transcription factor 1 (371 aa).

Positions 161 to 220 (RRKRRVLFSQAQVYELERRFKQQKYLSAPEREHLASMIHLTPTQVKIWFQNHRYKMKRQA) form a DNA-binding region, homeobox. Disordered stretches follow at residues 219 to 294 (QAKD…QQQA) and 308 to 342 (SGGP…ALQG). The span at 233 to 243 (SGGGGGGGGAG) shows a compositional bias: gly residues. Composition is skewed to low complexity over residues 244–253 (CPQQQQAQQQ) and 272–294 (AGAP…QQQA).

It belongs to the NK-2 homeobox family. In terms of processing, phosphorylated on serine residues. As to expression, thyroid, lung and CNS.

Its subcellular location is the nucleus. Functionally, transcription factor that binds and activates the promoter of thyroid specific genes such as thyroglobulin, thyroperoxidase, and thyrotropin receptor. Crucial in the maintenance of the thyroid differentiation phenotype. May play a role in lung development and surfactant homeostasis. This is Thyroid transcription factor 1 (TITF1) from Canis lupus familiaris (Dog).